The primary structure comprises 561 residues: Urocanate hydratase (561 aa).

NAD(+) is bound by residues 52-53, Q130, 176-178, E196, R201, 242-243, 263-267, 273-274, and Y322; these read GG, GMG, NA, QTSAH, and YL. Residue C410 is part of the active site. G492 provides a ligand contact to NAD(+).

It belongs to the urocanase family. NAD(+) serves as cofactor.

Its subcellular location is the cytoplasm. It carries out the reaction 4-imidazolone-5-propanoate = trans-urocanate + H2O. It participates in amino-acid degradation; L-histidine degradation into L-glutamate; N-formimidoyl-L-glutamate from L-histidine: step 2/3. In terms of biological role, catalyzes the conversion of urocanate to 4-imidazolone-5-propionate. In Salmonella choleraesuis (strain SC-B67), this protein is Urocanate hydratase.